Consider the following 515-residue polypeptide: ATP synthase subunit alpha (515 aa).

Position 169 to 176 (169 to 176 (GDRQTGKT)) interacts with ATP.

The protein belongs to the ATPase alpha/beta chains family. In terms of assembly, F-type ATPases have 2 components, CF(1) - the catalytic core - and CF(0) - the membrane proton channel. CF(1) has five subunits: alpha(3), beta(3), gamma(1), delta(1), epsilon(1). CF(0) has three main subunits: a(1), b(2) and c(9-12). The alpha and beta chains form an alternating ring which encloses part of the gamma chain. CF(1) is attached to CF(0) by a central stalk formed by the gamma and epsilon chains, while a peripheral stalk is formed by the delta and b chains.

The protein localises to the cell inner membrane. It catalyses the reaction ATP + H2O + 4 H(+)(in) = ADP + phosphate + 5 H(+)(out). Its function is as follows. Produces ATP from ADP in the presence of a proton gradient across the membrane. The alpha chain is a regulatory subunit. The protein is ATP synthase subunit alpha of Neisseria gonorrhoeae (strain ATCC 700825 / FA 1090).